The chain runs to 404 residues: Short chain dehydrogenase sirR (404 aa).

A signal peptide spans 1-28; the sequence is MHSKPQRALVIGATGVSGWSLCLQLLQT. NADP(+) is bound by residues Ser56 and Leu58. Asn67 and Asn157 each carry an N-linked (GlcNAc...) asparagine glycan. Ser237 (proton donor) is an active-site residue. Residue Asn274 is glycosylated (N-linked (GlcNAc...) asparagine). Val291 contacts NADP(+).

The protein belongs to the short-chain dehydrogenases/reductases (SDR) family. Highly divergent.

It participates in mycotoxin biosynthesis. In terms of biological role, short chain dehydrogenase; part of the gene cluster that mediates the biosynthesis of sirodesmin PL, an epipolythiodioxopiperazine (ETP) characterized by a disulfide bridged cyclic dipeptide and that acts as a phytotoxin which is involved in the blackleg didease of canola. SirD catalyzes the O-prenylation of L-tyrosine (L-Tyr) in the presence of dimethylallyl diphosphate (DMAPP) to yield 4-O-dimethylallyl-L-Tyr, and therefore represents probably the first pathway-specific enzyme in the biosynthesis of sirodesmin PL. 4-O-dimethylallyl-L-Tyr, then undergoes condensation with L-Ser in a reaction catalyzed by the non-ribosomal peptide synthase sirP to form the diketopiperazine (DKP) backbone. Further bishydroxylation of the DKP performed by the cytochrome P450 monooxygenase sirC leads to the production of the intermediate phomamide. This step is essential to form the reactive thiol group required for toxicity of sirodesmin PL. The next steps of sirodesmin biosynthesis are not well understood yet, but some predictions could be made from intermediate compounds identification. Phomamide is converted into phomalizarine via oxidation, probably by sirT. Further oxidation, methylation (by sirM or sirN) and reduction steps convert phomalizarine to deacetyl sirodesmin. Finally, acetyltransferase sirH probably acetylates deacetyl sirodesmin to produce sirodesmin PL. In Leptosphaeria maculans (Blackleg fungus), this protein is Short chain dehydrogenase sirR.